Here is a 384-residue protein sequence, read N- to C-terminus: Putative D-galactosamine-6-phosphate deaminase AgaS (384 aa).

2 consecutive SIS domains span residues 45–197 (LEPL…SQTF) and 215–364 (SEGV…PDTP).

It belongs to the SIS family. AgaS subfamily.

It catalyses the reaction D-galactosamine 6-phosphate + H2O = D-tagatopyranose 1-phosphate + NH4(+). In terms of biological role, catalyzes the isomerization-deamination of galactosamine 6-phosphate to form tagatofuranose 6-phosphate and ammonium ion. This is Putative D-galactosamine-6-phosphate deaminase AgaS (agaS) from Escherichia coli (strain K12).